The chain runs to 603 residues: uncharacterized protein (603 aa).

In terms of domain architecture, PE spans 1 to 93; it reads MSFVIAAPET…AGAYASAEAA (93 aa). Residues 309 to 333 are disordered; it reads GIFTGNGGTGGTGGTGTGNQLVGGE.

It belongs to the mycobacterial PE family. PGRS subfamily.

This is an uncharacterized protein from Mycobacterium tuberculosis (strain CDC 1551 / Oshkosh).